Consider the following 121-residue polypeptide: Large ribosomal subunit protein bL19 (121 aa).

This sequence belongs to the bacterial ribosomal protein bL19 family.

Its function is as follows. This protein is located at the 30S-50S ribosomal subunit interface and may play a role in the structure and function of the aminoacyl-tRNA binding site. The chain is Large ribosomal subunit protein bL19 from Chloroherpeton thalassium (strain ATCC 35110 / GB-78).